The following is a 365-amino-acid chain: Terpene cyclase 4 (365 aa).

Positions 1 to 11 (MVPSLITPPPS) are enriched in pro residues. The disordered stretch occupies residues 1–20 (MVPSLITPPPSRSGEATPQK). Mg(2+)-binding residues include D118, N260, and S264. The short motif at 118-122 (DDPFD) is the D(D/E)XX(D/E) motif element. The short motif at 260–268 (NDLCSYRKD) is the NSE motif element. The WxxxxxRY motif signature appears at 341–348 (WSLYTFRY). (2E,6E)-farnesyl diphosphate contacts are provided by R347 and Y348.

This sequence belongs to the terpene synthase family. In terms of assembly, homodimer. Requires Mg(2+) as cofactor.

The catalysed reaction is (2E,6E)-farnesyl diphosphate + H2O = koraiol + diphosphate. It participates in sesquiterpene biosynthesis. Functionally, terpene cyclase that catalyzes the cyclization of farnesyl diphosphate (FPP) to the sesquiterpene koraiol. In Gibberella fujikuroi (strain CBS 195.34 / IMI 58289 / NRRL A-6831) (Bakanae and foot rot disease fungus), this protein is Terpene cyclase 4.